Reading from the N-terminus, the 333-residue chain is DNA-directed RNA polymerase subunit alpha (333 aa).

The segment at 1-234 (MQSSVNEFLT…QQLAAFVDLK (234 aa)) is alpha N-terminal domain (alpha-NTD). Positions 248-333 (IDPILLRPVD…SLKKDDKATA (86 aa)) are alpha C-terminal domain (alpha-CTD).

This sequence belongs to the RNA polymerase alpha chain family. In terms of assembly, homodimer. The RNAP catalytic core consists of 2 alpha, 1 beta, 1 beta' and 1 omega subunit. When a sigma factor is associated with the core the holoenzyme is formed, which can initiate transcription.

It catalyses the reaction RNA(n) + a ribonucleoside 5'-triphosphate = RNA(n+1) + diphosphate. Its function is as follows. DNA-dependent RNA polymerase catalyzes the transcription of DNA into RNA using the four ribonucleoside triphosphates as substrates. This Pseudomonas aeruginosa (strain UCBPP-PA14) protein is DNA-directed RNA polymerase subunit alpha.